The chain runs to 467 residues: F-box only protein 6 (467 aa).

An F-box domain is found at 114–163; sequence QEIWQEFPQDLFEDVVSRLPMATFFQFRAVCRKWNALIDSDSFSRCFTEL. Kelch repeat units follow at residues 163-211, 252-305, and 406-456; these read LPQT…MASA, GMTL…NFKS, and CLGN…IACG.

This is F-box only protein 6 (FBX6) from Arabidopsis thaliana (Mouse-ear cress).